The chain runs to 265 residues: Urease accessory protein UreH (265 aa).

This sequence belongs to the UreD family. As to quaternary structure, ureH, UreF and UreG form a complex that acts as a GTP-hydrolysis-dependent molecular chaperone, activating the urease apoprotein by helping to assemble the nickel containing metallocenter of UreC. The UreE protein probably delivers the nickel.

It is found in the cytoplasm. In terms of biological role, required for maturation of urease via the functional incorporation of the urease nickel metallocenter. This chain is Urease accessory protein UreH, found in Helicobacter pylori (strain HPAG1).